Consider the following 192-residue polypeptide: Nucleoside triphosphate pyrophosphatase (192 aa).

The active-site Proton acceptor is the Asp-73.

This sequence belongs to the Maf family. A divalent metal cation serves as cofactor.

The protein localises to the cytoplasm. It catalyses the reaction a ribonucleoside 5'-triphosphate + H2O = a ribonucleoside 5'-phosphate + diphosphate + H(+). The enzyme catalyses a 2'-deoxyribonucleoside 5'-triphosphate + H2O = a 2'-deoxyribonucleoside 5'-phosphate + diphosphate + H(+). In terms of biological role, nucleoside triphosphate pyrophosphatase. May have a dual role in cell division arrest and in preventing the incorporation of modified nucleotides into cellular nucleic acids. This Ehrlichia ruminantium (strain Gardel) protein is Nucleoside triphosphate pyrophosphatase.